The primary structure comprises 32 residues: Hemocyanin C chain (32 aa).

It belongs to the tyrosinase family. Hemocyanin subfamily. Hemolymph.

It localises to the secreted. It is found in the extracellular space. In terms of biological role, hemocyanins are copper-containing oxygen carriers occurring freely dissolved in the hemolymph of many mollusks and arthropods. The polypeptide is Hemocyanin C chain (Cherax destructor (Common yabby crayfish)).